A 252-amino-acid chain; its full sequence is Ubiquinone biosynthesis protein COQ4 homolog 1, mitochondrial (252 aa).

Residues histidine 130, aspartate 131, histidine 134, and glutamate 146 each contribute to the Zn(2+) site.

It belongs to the COQ4 family. Component of a multi-subunit COQ enzyme complex. The cofactor is Zn(2+).

The protein localises to the mitochondrion inner membrane. The catalysed reaction is a 4-hydroxy-3-methoxy-5-(all-trans-polyprenyl)benzoate + H(+) = a 2-methoxy-6-(all-trans-polyprenyl)phenol + CO2. Its pathway is cofactor biosynthesis; ubiquinone biosynthesis. In terms of biological role, lyase that catalyzes the C1-decarboxylation of 4-hydroxy-3-methoxy-5-(all-trans-polyprenyl)benzoic acid into 2-methoxy-6-(all-trans-polyprenyl)phenol during ubiquinone biosynthesis. The polypeptide is Ubiquinone biosynthesis protein COQ4 homolog 1, mitochondrial (Trypanosoma cruzi (strain CL Brener)).